Consider the following 385-residue polypeptide: MTTPPGTLPVDDSAVHTVREIAQQPALWREVDRIVGASREALDAFLDPLVARGDLRVVLTGAGTSAFAGQVLQPSLARHLGRRVDAVPTTDLVADPRGCLAEDLPTLLVSFARSGDSPESVAATALADQVLSEVHHLVITCNEQGRLAREHTRRPRSHVLLMPAASNDRGFAMTSSFTCMTLAALLALGKDARDGVAERLARAAESIIEDGAADRTAGALVDRAPERIVFLGSGPLKGLAEESALKVLELTGGTLMAVAESSLGFRHGPKAVLNERSVAVVYVSNDPYTRRYDHDIVAELRGNLPVGSVVAVSAESGAGTEGADAWPLPGLGDVEDAALALPAVVYAQLIALRASQARGLRPDNPFPSGEVNRVVQGVTLHSLND.

2 consecutive SIS domains span residues 46–206 (LDPL…AAES) and 217–365 (AGAL…PDNP).

Belongs to the SIS family. AgaS subfamily.

The enzyme catalyses D-galactosamine 6-phosphate + H2O = D-tagatopyranose 1-phosphate + NH4(+). Catalyzes the isomerization-deamination of galactosamine 6-phosphate to form tagatofuranose 6-phosphate and ammonium ion. This is Putative D-galactosamine-6-phosphate deaminase AgaS (agaS) from Streptomyces coelicolor (strain ATCC BAA-471 / A3(2) / M145).